A 181-amino-acid polypeptide reads, in one-letter code: Acireductone dioxygenase (181 aa).

Residues H91, H93, E97, and H136 each coordinate Fe(2+). Ni(2+)-binding residues include H91, H93, E97, and H136.

This sequence belongs to the acireductone dioxygenase (ARD) family. Monomer. Interacts with MMP14. Fe(2+) serves as cofactor. Ni(2+) is required as a cofactor.

It is found in the cytoplasm. Its subcellular location is the nucleus. The protein localises to the cell membrane. The catalysed reaction is 1,2-dihydroxy-5-(methylsulfanyl)pent-1-en-3-one + O2 = 4-methylsulfanyl-2-oxobutanoate + formate + 2 H(+). The enzyme catalyses 1,2-dihydroxy-5-(methylsulfanyl)pent-1-en-3-one + O2 = 3-(methylsulfanyl)propanoate + CO + formate + 2 H(+). It participates in amino-acid biosynthesis; L-methionine biosynthesis via salvage pathway; L-methionine from S-methyl-5-thio-alpha-D-ribose 1-phosphate: step 5/6. Functionally, catalyzes 2 different reactions between oxygen and the acireductone 1,2-dihydroxy-3-keto-5-methylthiopentene (DHK-MTPene) depending upon the metal bound in the active site. Fe-containing acireductone dioxygenase (Fe-ARD) produces formate and 2-keto-4-methylthiobutyrate (KMTB), the alpha-ketoacid precursor of methionine in the methionine recycle pathway. Ni-containing acireductone dioxygenase (Ni-ARD) produces methylthiopropionate, carbon monoxide and formate, and does not lie on the methionine recycle pathway. The protein is Acireductone dioxygenase (adi1) of Danio rerio (Zebrafish).